The chain runs to 870 residues: Probable coatomer subunit gamma (870 aa).

HEAT repeat units lie at residues 60 to 97 (TEAT…VSDD), 99 to 133 (IIVT…TGML), 168 to 205 (EVVR…NDRL), 278 to 315 (SEIQ…AHPN), 316 to 350 (AVMS…GAES), and 389 to 425 (HTVM…ENPD).

This sequence belongs to the COPG family. As to quaternary structure, oligomeric complex that consists of at least the alpha, beta, beta', gamma, delta, epsilon and zeta subunits.

The protein localises to the cytoplasm. The protein resides in the golgi apparatus membrane. Its subcellular location is the cytoplasmic vesicle. It is found in the COPI-coated vesicle membrane. Its function is as follows. The coatomer is a cytosolic protein complex that binds to dilysine motifs and reversibly associates with Golgi non-clathrin-coated vesicles, which further mediate biosynthetic protein transport from the ER, via the Golgi up to the trans Golgi network. Coatomer complex is required for budding from Golgi membranes, and is essential for the retrograde Golgi-to-ER transport of dilysine-tagged proteins. This Caenorhabditis elegans protein is Probable coatomer subunit gamma.